The primary structure comprises 401 residues: MFERFLSTETKYLRTSEIRDLLKLTEGKNVISLAGGLPDPQTFPVEEIKKIADDILLNSADKALQYTATAGISEFRRELVNLSRLRGISGIDERNVFVTVGSQEALFMIFNILLDPGDNVVVEAPTYLAALNAMRTRKPNFISITVTEMGPDLDELERKIKDAHSNGKKVKLMYVIPTAQNPAGTTMNTEDRKRLLEIASKYDFLIFEDDAYGFLVFEGESPPPIKAFDKEGRVIYTSTFSKILAPGLRLGWVIAHEDFIKEMELYKQNVDLHTPSLSQYIAMEAIRRGIIQNNLPKIRRVYKEKRDVMLEAIETYFPNDARWTKPVGGMFVFAWLPQKIDTTKMLEKALQRGVAYVPGSSFYADYSGKNTMRINFSFPKKEELIEGIKRLGDTIKHELST.

Residue Lys242 is modified to N6-(pyridoxal phosphate)lysine.

This sequence belongs to the class-I pyridoxal-phosphate-dependent aminotransferase family. As to quaternary structure, homodimer. Pyridoxal 5'-phosphate serves as cofactor.

The protein localises to the cytoplasm. This is an uncharacterized protein from Saccharolobus solfataricus (strain ATCC 35092 / DSM 1617 / JCM 11322 / P2) (Sulfolobus solfataricus).